Consider the following 353-residue polypeptide: 11-beta-hydroxysteroid dehydrogenase B (353 aa).

Residues leucine 10 to proline 30 traverse the membrane as a helical; Signal-anchor for type II membrane protein segment. The Proline-knob signature appears at proline 13–alanine 26. Residues glycine 54–arginine 80 and aspartate 105 each bind NADP(+). Serine 184 lines the substrate pocket. The active-site Proton acceptor is the tyrosine 197. Residues tyrosine 197–lysine 201 and lysine 201 contribute to the NADP(+) site.

Belongs to the short-chain dehydrogenases/reductases (SDR) family. Expressed in seeds (at protein level).

The protein localises to the lipid droplet. It localises to the membrane. The enzyme catalyses an 11beta-hydroxysteroid + NADP(+) = an 11-oxosteroid + NADPH + H(+). Its function is as follows. Has dehydrogenase activity against 11 beta-hydroxysteroid and 17 beta-hydroxysteroid. May be involved in signal transduction regulated by various sterols. This chain is 11-beta-hydroxysteroid dehydrogenase B, found in Arachis hypogaea (Peanut).